Consider the following 261-residue polypeptide: uncharacterized protein (261 aa).

Positions 7, 9, 96, 132, 156, and 211 each coordinate a divalent metal cation.

Belongs to the metallo-dependent hydrolases superfamily. TatD-type hydrolase family. The cofactor is a divalent metal cation.

This is an uncharacterized protein from Mycoplasma pneumoniae (strain ATCC 29342 / M129 / Subtype 1) (Mycoplasmoides pneumoniae).